The following is a 198-amino-acid chain: MSKLICVAKIGAAHGVRGEVRLWTFTEDPLAVLHYGPLTTKDGSRSFEVAKAREAKDHLVATIKGVTDRNAAERLNGLELYVPRDRLPETDDDEYYHADLIGLAAETTAGAPLGRVLAIHNFGAGDIIEIAPPSGSTLMLPFTNAVVPTVDLAGGRVIIELPAEIEGEDQDSSDNAGSPEGDAAASNSARHPRESGDP.

Residues 92–168 form the PRC barrel domain; the sequence is DDEYYHADLI…IELPAEIEGE (77 aa). The span at 163-172 shows a compositional bias: acidic residues; sequence AEIEGEDQDS. Residues 163-198 form a disordered region; the sequence is AEIEGEDQDSSDNAGSPEGDAAASNSARHPRESGDP.

The protein belongs to the RimM family. In terms of assembly, binds ribosomal protein uS19.

The protein localises to the cytoplasm. Its function is as follows. An accessory protein needed during the final step in the assembly of 30S ribosomal subunit, possibly for assembly of the head region. Essential for efficient processing of 16S rRNA. May be needed both before and after RbfA during the maturation of 16S rRNA. It has affinity for free ribosomal 30S subunits but not for 70S ribosomes. This is Ribosome maturation factor RimM from Bradyrhizobium sp. (strain BTAi1 / ATCC BAA-1182).